Reading from the N-terminus, the 137-residue chain is Small heat shock protein IbpA (137 aa).

The region spanning 28-137 (SQGNGGYPPY…TLKPRRIEIK (110 aa)) is the sHSP domain.

This sequence belongs to the small heat shock protein (HSP20) family. As to quaternary structure, monomer. Forms homomultimers of about 100-150 subunits at optimal growth temperatures. Conformation changes to monomers at high temperatures or high ionic concentrations.

It is found in the cytoplasm. Its function is as follows. Associates with aggregated proteins, together with IbpB, to stabilize and protect them from irreversible denaturation and extensive proteolysis during heat shock and oxidative stress. Aggregated proteins bound to the IbpAB complex are more efficiently refolded and reactivated by the ATP-dependent chaperone systems ClpB and DnaK/DnaJ/GrpE. Its activity is ATP-independent. This Serratia proteamaculans (strain 568) protein is Small heat shock protein IbpA.